The following is a 240-amino-acid chain: UDP-2,3-diacylglucosamine hydrolase (240 aa).

Positions 9, 11, 43, 81, and 116 each coordinate Mn(2+). 81 to 82 contacts substrate; that stretch reads NR. Substrate is bound by residues Asp-124, Ser-162, Lys-166, Lys-169, and His-197. Positions 197 and 199 each coordinate Mn(2+).

It belongs to the LpxH family. Mn(2+) serves as cofactor.

Its subcellular location is the cell inner membrane. The catalysed reaction is UDP-2-N,3-O-bis[(3R)-3-hydroxytetradecanoyl]-alpha-D-glucosamine + H2O = 2-N,3-O-bis[(3R)-3-hydroxytetradecanoyl]-alpha-D-glucosaminyl 1-phosphate + UMP + 2 H(+). It participates in glycolipid biosynthesis; lipid IV(A) biosynthesis; lipid IV(A) from (3R)-3-hydroxytetradecanoyl-[acyl-carrier-protein] and UDP-N-acetyl-alpha-D-glucosamine: step 4/6. In terms of biological role, hydrolyzes the pyrophosphate bond of UDP-2,3-diacylglucosamine to yield 2,3-diacylglucosamine 1-phosphate (lipid X) and UMP by catalyzing the attack of water at the alpha-P atom. Involved in the biosynthesis of lipid A, a phosphorylated glycolipid that anchors the lipopolysaccharide to the outer membrane of the cell. This chain is UDP-2,3-diacylglucosamine hydrolase, found in Neisseria meningitidis serogroup C (strain 053442).